The following is a 416-amino-acid chain: TNF receptor-associated factor 1 (416 aa).

Positions 1 to 24 (MASSSGSSPRPAPDENEFPFGCPP) are disordered. The residue at position 146 (serine 146) is a Phosphoserine. Positions 182–264 (MKEKLLAELE…QSLRLMEEAS (83 aa)) form a coiled coil. Residues lysine 185 and lysine 193 each participate in a glycyl lysine isopeptide (Lys-Gly) (interchain with G-Cter in ubiquitin) cross-link. An MATH domain is found at 266–412 (DGTFLWKITN…DDTMFLKCIV (147 aa)).

Homotrimer. Heterotrimer with TRAF2. Interacts with TNFRSF1A/TNFR1, TNFRSF1B/TNFR2, TNFRSF4, TNFRSF5/CD40, TNFRSF8/CD30, TNFRSF9/CD137, TNFRSF11A/RANK, TNFRSF13C, TNFRSF18/AITR, TNFRSF17/BCMA, TNFRSF19/TROY, TNFRSF19L/RELT, XEDAR, EDAR, Epstein-Barr virus BNFL1/LMP-1, TANK/ITRAF, TRAIP and RIPK2. Interacts with BIRC2 and BIRC3 N-terminus; a single BIRC2 or BIRC3 molecule interacts with a heterotrimer formed by TRAF1 and TRAF2. Interacts with NFATC2IP, TRAFD1 and with HIVEP3. Interacts with MAP3K14. Interacts with GPS2. In terms of processing, polyubiquitinated by BIRC2 and/or BIRC3, leading to its subsequent proteasomal degradation. Ubiquitinated by the SCF(FBXL2) complex, leading to its degradation by the proteasome.

Adapter molecule that regulates the activation of NF-kappa-B and JNK. Plays a role in the regulation of cell survival and apoptosis. The heterotrimer formed by TRAF1 and TRAF2 is part of a E3 ubiquitin-protein ligase complex that promotes ubiquitination of target proteins, such as MAP3K14. The TRAF1/TRAF2 complex recruits the antiapoptotic E3 protein-ubiquitin ligases BIRC2 and BIRC3 to TNFRSF1B/TNFR2. The chain is TNF receptor-associated factor 1 (TRAF1) from Homo sapiens (Human).